The sequence spans 880 residues: Leucine--tRNA ligase (880 aa).

The 'HIGH' region motif lies at 46 to 56 (PYPSGALHMGH). The 'KMSKS' region signature appears at 638-642 (KMSKS). Lys641 is an ATP binding site.

Belongs to the class-I aminoacyl-tRNA synthetase family.

It localises to the cytoplasm. It catalyses the reaction tRNA(Leu) + L-leucine + ATP = L-leucyl-tRNA(Leu) + AMP + diphosphate. In Xanthomonas oryzae pv. oryzae (strain MAFF 311018), this protein is Leucine--tRNA ligase.